Here is a 317-residue protein sequence, read N- to C-terminus: 17-beta-hydroxysteroid dehydrogenase type 6 (317 aa).

Residues 1 to 17 (MWFYLVTLVGLYYLLRW) form the signal peptide. 33–57 (FITGCDSGFGNLLARQLDRRGMRVL) is an NAD(+) binding site. The N-linked (GlcNAc...) asparagine glycan is linked to Asn-161. Ser-164 is a substrate binding site. Tyr-176 serves as the catalytic Proton acceptor.

The protein belongs to the short-chain dehydrogenases/reductases (SDR) family. Detected in prostate, liver and kidney.

It localises to the microsome membrane. The protein resides in the endoplasmic reticulum membrane. The enzyme catalyses all-trans-retinol--[retinol-binding protein] + NAD(+) = all-trans-retinal--[retinol-binding protein] + NADH + H(+). It carries out the reaction all-trans-retinol + NAD(+) = all-trans-retinal + NADH + H(+). It catalyses the reaction androsterone + NAD(+) = 5alpha-androstan-3,17-dione + NADH + H(+). The catalysed reaction is testosterone + NAD(+) = androst-4-ene-3,17-dione + NADH + H(+). The enzyme catalyses 5alpha-androstane-3alpha,17beta-diol + NAD(+) = 17beta-hydroxy-5alpha-androstan-3-one + NADH + H(+). It carries out the reaction 17beta-estradiol + NAD(+) = estrone + NADH + H(+). It catalyses the reaction 17beta-estradiol + NADP(+) = estrone + NADPH + H(+). The catalysed reaction is 3alpha-hydroxy-5alpha-pregnan-20-one + NAD(+) = 5alpha-pregnane-3,20-dione + NADH + H(+). The enzyme catalyses 5alpha-androstane-3beta,17beta-diol + NAD(+) = 17beta-hydroxy-5alpha-androstan-3-one + NADH + H(+). It carries out the reaction 3beta-hydroxy-5alpha-androstan-17-one + NAD(+) = 5alpha-androstan-3,17-dione + NADH + H(+). Its activity is regulated as follows. Competitively inhibited by 9-cis-retinoic acid and 13-cis-retinoic acid. Functionally, NAD-dependent oxidoreductase with broad substrate specificity that shows both oxidative and reductive activity (in vitro). Has retinol dehydrogenase activity towards all-trans-retinol (in vitro). Has 17-beta-hydroxysteroid dehydrogenase activity towards various steroids (in vitro). Converts 5-alpha-androstan-3-alpha,17-beta-diol to androsterone and estradiol to estrone (in vitro). Has 3-alpha-hydroxysteroid dehydrogenase activity towards androsterone (in vitro). The protein is 17-beta-hydroxysteroid dehydrogenase type 6 (Hsd17b6) of Rattus norvegicus (Rat).